The following is a 1019-amino-acid chain: Photoactivated adenylate cyclase subunit alpha (1019 aa).

The region spanning 55-148 (LRRLMYLSAS…GRMYGEWHMK (94 aa)) is the BLUF 1 domain. The Guanylate cyclase 1 domain maps to 204–332 (VVTFIYLVEF…DCINTASRIT (129 aa)). A BLUF 2 domain is found at 467 to 559 (LITLTYISQA…RVYGSPLDMT (93 aa)). The 130-residue stretch at 615-744 (VMLATDICSF…EVSARVMEVE (130 aa)) folds into the Guanylate cyclase 2 domain. Residues 822–861 (GTNAPGRGAPAGGIPSSPKVRPPGRTNSVSSYTPDPNEAL) form a disordered region. Over residues 825 to 839 (APGRGAPAGGIPSSP) the composition is skewed to low complexity. Polar residues predominate over residues 846–855 (RTNSVSSYTP).

It belongs to the adenylyl cyclase class-4/guanylyl cyclase family. In terms of assembly, heterotetramer of two alpha and two beta subunits. FAD is required as a cofactor.

The protein resides in the cell projection. It localises to the cilium. The protein localises to the flagellum. It carries out the reaction ATP = 3',5'-cyclic AMP + diphosphate. Its activity is regulated as follows. Activity increased by up to 80-fold under blue light. Functionally, acts as a blue light photoreceptor for the step-up photophobic response. Mediates photoavoidance. This Euglena gracilis protein is Photoactivated adenylate cyclase subunit alpha.